The following is a 508-amino-acid chain: Acyl-CoA-binding domain-containing protein 5 (508 aa).

Residues 44–133 (YETRFEAAVK…MKKIIETMPM (90 aa)) form the ACB domain. An acyl-CoA is bound by residues 55-64 (IQSLPKNGSF), 75-79 (YSFYK), Lys-101, and Tyr-120. Residues 175 to 215 (AKAVNGKAESSDSGAESEEEEAQEELKGAEQSGSDDKKTLK) form a disordered region. A coiled-coil region spans residues 181–214 (KAESSDSGAESEEEEAQEELKGAEQSGSDDKKTL). 6 positions are modified to phosphoserine: Ser-184, Ser-185, Ser-187, Ser-191, Ser-206, and Ser-233. The span at 198 to 215 (EELKGAEQSGSDDKKTLK) shows a compositional bias: basic and acidic residues. The span at 240–260 (SDIHTDSSRSTRSSEDEKPGD) shows a compositional bias: basic and acidic residues. The interval 240–300 (SDIHTDSSRS…LTSDSDSEVY (61 aa)) is disordered. Residue Ser-303 is modified to Phosphoserine. 2 disordered regions span residues 318–340 (PTQHLESSGFCEDAQQSPGNGSI) and 353–419 (EVKH…RGSR). Basic and acidic residues predominate over residues 353–376 (EVKHGGEDGRSSSGAPHRETRGGE). At Ser-405 the chain carries Phosphoserine. Basic and acidic residues predominate over residues 408-418 (DGERWGSDRGS). A coiled-coil region spans residues 428-453 (LVLIRLQEDMQNVLQRLHKLETLTAS). N6-acetyllysine is present on Lys-446. The helical transmembrane segment at 480–500 (GALAFAIIWPFIAQWLAHLYY) threads the bilayer.

It belongs to the ATG37 family.

The protein resides in the peroxisome membrane. Functionally, acyl-CoA binding protein which acts as the peroxisome receptor for pexophagy but is dispensable for aggrephagy and nonselective autophagy. Binds medium- and long-chain acyl-CoA esters. The polypeptide is Acyl-CoA-binding domain-containing protein 5 (Acbd5) (Mus musculus (Mouse)).